Reading from the N-terminus, the 295-residue chain is Iron-sulfur cluster carrier protein (295 aa).

38 to 45 (GKGGVGKS) is a binding site for ATP.

The protein belongs to the Mrp/NBP35 ATP-binding proteins family. As to quaternary structure, homodimer.

Binds and transfers iron-sulfur (Fe-S) clusters to target apoproteins. Can hydrolyze ATP. The sequence is that of Iron-sulfur cluster carrier protein from Pyrococcus abyssi (strain GE5 / Orsay).